The primary structure comprises 467 residues: UDP-N-acetylmuramoylalanine--D-glutamate ligase (467 aa).

121–127 serves as a coordination point for ATP; the sequence is GTNGKST.

Belongs to the MurCDEF family.

It localises to the cytoplasm. The catalysed reaction is UDP-N-acetyl-alpha-D-muramoyl-L-alanine + D-glutamate + ATP = UDP-N-acetyl-alpha-D-muramoyl-L-alanyl-D-glutamate + ADP + phosphate + H(+). It functions in the pathway cell wall biogenesis; peptidoglycan biosynthesis. Cell wall formation. Catalyzes the addition of glutamate to the nucleotide precursor UDP-N-acetylmuramoyl-L-alanine (UMA). In Brucella abortus (strain 2308), this protein is UDP-N-acetylmuramoylalanine--D-glutamate ligase.